Consider the following 369-residue polypeptide: Mitogen-activated protein kinase 11 (369 aa).

The region spanning 40–326 (VPPLRPIGRG…VDEALCHPYL (287 aa)) is the Protein kinase domain. Residues 46-54 (IGRGASGIV) and Lys-69 contribute to the ATP site. Asp-166 functions as the Proton acceptor in the catalytic mechanism. Thr-198 carries the phosphothreonine modification. The short motif at 198 to 200 (TEY) is the TXY element. Residue Tyr-200 is modified to Phosphotyrosine. Thr-203 is subject to Phosphothreonine.

This sequence belongs to the protein kinase superfamily. CMGC Ser/Thr protein kinase family. MAP kinase subfamily. In terms of assembly, interacts with MKK1, MKK2 and MKK6. In terms of processing, dually phosphorylated on Thr-198 and Tyr-200, which activates the enzyme.

It carries out the reaction L-seryl-[protein] + ATP = O-phospho-L-seryl-[protein] + ADP + H(+). It catalyses the reaction L-threonyl-[protein] + ATP = O-phospho-L-threonyl-[protein] + ADP + H(+). Activated by threonine and tyrosine phosphorylation. The protein is Mitogen-activated protein kinase 11 (MPK11) of Arabidopsis thaliana (Mouse-ear cress).